A 396-amino-acid chain; its full sequence is Probable sugar efflux transporter (396 aa).

Over 1 to 14 the chain is Cytoplasmic; the sequence is MTTNTVSRKVAWLR. Residues 15–35 traverse the membrane as a helical segment; the sequence is VVTLAVAAFIFNTTEFVPVGL. At 36-49 the chain is on the periplasmic side; the sequence is LSDIAQSFHMQTAQ. Residues 50–70 traverse the membrane as a helical segment; the sequence is VGIMLTIYAWVVALMSLPFML. Topologically, residues 71 to 80 are cytoplasmic; it reads MTSQVERRKL. The chain crosses the membrane as a helical span at residues 81 to 101; that stretch reads LICLFVVFIASHVLSFLSWSF. Residue threonine 102 is a topological domain, periplasmic. The helical transmembrane segment at 103–123 threads the bilayer; the sequence is VLVISRIGVAFAHAIFWSITA. Over 124 to 135 the chain is Cytoplasmic; the sequence is SLAIRMAPAGKR. A helical transmembrane segment spans residues 136–156; sequence AQALSLIATGTALAMVLGLPL. Topologically, residues 157-169 are periplasmic; sequence GRIVGQYFGWRMT. A helical transmembrane segment spans residues 170–190; that stretch reads FFAIGIGALVTLLCLIKLLPL. The Cytoplasmic portion of the chain corresponds to 191–208; sequence LPSEHSGSLKSLPLLFRR. Residues 209–229 traverse the membrane as a helical segment; it reads PALMSIYLLTVVVVTAHYTAY. Residues 230–245 are Periplasmic-facing; sequence SYIEPFVQNIAGFSAN. Residues 246–266 traverse the membrane as a helical segment; the sequence is FATALLLLLGGAGIIGSVIFG. The Cytoplasmic segment spans residues 267-274; that stretch reads KLGNQYAS. A helical transmembrane segment spans residues 275-295; that stretch reads ALVSTAIALLLVCLALLLPAA. The Periplasmic portion of the chain corresponds to 296–298; it reads NSE. Residues 299–319 form a helical membrane-spanning segment; the sequence is IHLGVLSIFWGIAMMIIGLGM. The Cytoplasmic segment spans residues 320–332; the sequence is QVKVLALAPDATD. A helical transmembrane segment spans residues 333-353; the sequence is VAMALFSGIFNIGIGAGALVG. The Periplasmic segment spans residues 354–363; the sequence is NQVSLHWSMS. The chain crosses the membrane as a helical span at residues 364–384; it reads MIGYVGAVPAFAALIWSIIIF. At 385 to 396 the chain is on the cytoplasmic side; that stretch reads RRWPVTLEEQTQ.

Belongs to the major facilitator superfamily. SotB (TC 2.A.1.2) family.

The protein localises to the cell inner membrane. Its function is as follows. Involved in the efflux of sugars. The physiological role may be the reduction of the intracellular concentration of toxic sugars or sugar metabolites. This is Probable sugar efflux transporter from Shigella flexneri.